Consider the following 75-residue polypeptide: Dermaseptin-S11 (75 aa).

A signal peptide spans 1–22 (MAFLKKSLFLVLFLGMVSLSIC). A propeptide spanning residues 23–45 (EEEKRENEDEEEQEDDEQSEEKR) is cleaved from the precursor. The interval 25–44 (EKRENEDEEEQEDDEQSEEK) is disordered. Residues 30–41 (EDEEEQEDDEQS) are compositionally biased toward acidic residues.

The protein belongs to the frog skin active peptide (FSAP) family. Dermaseptin subfamily. Expressed by the skin glands.

It localises to the secreted. It is found in the target cell membrane. In terms of biological role, antimicrobial peptide with activity against Gram-positive and Gram-negative bacteria, and fungi. Has hemolytic activity. This Phyllomedusa sauvagei (Sauvage's leaf frog) protein is Dermaseptin-S11.